The chain runs to 312 residues: MSGIDPKRFGKVAVLLGGESAERDVSLNSGRLVLQGLRDAGIDAHPFDPAQRPLAALKDEGFVRAFNALHGGYGENGQIQGALDFYGIRYTGSGVLGSALGLDKFRTKLVWQQTGIPTPPFETVMRGDDYAARAKDIVAKLGMPLFVKPASEGSSVAVEKVKSADALPAALEEAAKHDKIVIVEKSIEGGGEYTACIAADLDLPLIKIVPAGEFYDYHAKYIANDTQYLIPCGLDAAKEAEFKRIARRAFDVLGCTDWGRADFMLDAAGNPYFLEVNTAPGMTDHSLPPKAARAVGISYSELVVKVLSLTLD.

Positions 108-308 constitute an ATP-grasp domain; that stretch reads KLVWQQTGIP…YSELVVKVLS (201 aa). 138-193 is a binding site for ATP; it reads VAKLGMPLFVKPASEGSSVAVEKVKSADALPAALEEAAKHDKIVIVEKSIEGGGEY. Positions 262, 275, and 277 each coordinate Mg(2+).

It belongs to the D-alanine--D-alanine ligase family. It depends on Mg(2+) as a cofactor. Mn(2+) serves as cofactor.

Its subcellular location is the cytoplasm. It catalyses the reaction 2 D-alanine + ATP = D-alanyl-D-alanine + ADP + phosphate + H(+). It participates in cell wall biogenesis; peptidoglycan biosynthesis. In terms of biological role, cell wall formation. The chain is D-alanine--D-alanine ligase from Burkholderia thailandensis (strain ATCC 700388 / DSM 13276 / CCUG 48851 / CIP 106301 / E264).